The following is a 113-amino-acid chain: Urocortin-2 (113 aa).

The first 23 residues, 1 to 23 (MMTRWALVVFVVLMLDRILFVPG), serve as a signal peptide directing secretion. Positions 24 to 71 (TPIPTFQLLPQNSLETTPSSVTSESSSGTTTGPSASWSNSKASPYLDT) are excised as a propeptide. A compositionally biased stretch (low complexity) spans 37 to 61 (LETTPSSVTSESSSGTTTGPSASWS). The tract at residues 37 to 64 (LETTPSSVTSESSSGTTTGPSASWSNSK) is disordered. Residue Val-110 is modified to Valine amide; partial.

The protein belongs to the sauvagine/corticotropin-releasing factor/urotensin I family. As to quaternary structure, binds with high affinity to CRF receptors 2-alpha and 2-beta. Post-translationally, glycosylated.

Its subcellular location is the secreted. Functionally, suppresses food intake, delays gastric emptying and decreases heat-induced edema. Might represent an endogenous ligand for maintaining homeostasis after stress. This is Urocortin-2 (Ucn2) from Mus musculus (Mouse).